Consider the following 756-residue polypeptide: MSFVAGVIRRLDETVVNRIAAGEVIQRPANAIKEMIENCLDAKSTSIQVIVKEGGLKLIQIQDNGTGIRKEDLDIVCERFTTSKLQSFEDLASISTYGFRGEALASISHVAHVTITTKTADGKCAYRASYSDGKLKAPPKPCAGNQGTQITVEDLFYNIATRRKALKNPSEEYGKILEVVGRYSVHNAGISFSVKKQGETVADVRTLPNASTVDNIRSIFGNAVSRELIEIGCEDKTLAFKMNGYISNANYSVKKCIFLLFINHRLVESTSLRKAIETVYAAYLPKNTHPFLYLSLEISPQNVDVNVHPTKHEVHFLHEESILERVQQHIESKLLGSNSSRMYFTQTLLPGLAGPSGEMVKSTTSLTSSSTSGSSDKVYAHQMVRTDSREQKLDAFLQPLSKPLSSQPQAIVTEDKTDISSGRARQQDEEMLELPAPAEVAAKNQSLEGDTTKGTSEMSEKRGPTSSNPRKRHREDSDVEMVEDDSRKEMTAACTPRRRIINLTSVLSLQEEINEQGHEVLREMLHNHSFVGCVNPQWALAQHQTKLYLLNTTKLSEELFYQILIYDFANFGVLRLSEPAPLFDLAMLALDSPESGWTEEDGPKEGLAEYIVEFLKKKAEMLADYFSLEIDEEGNLIGLPLLIDNYVPPLEGLPIFILRLATEVNWDEEKECFESLSKECAMFYSIRKQYISEESTLSGQQSEVPGSIPNSWKWTVEHIVYKALRSHILPPKHFTEDGNILQLANLPDLYKVFERC.

At Ser2 the chain carries N-acetylserine. The residue at position 33 (Lys33) is an N6-acetyllysine. ATP contacts are provided by residues Asn38, Asp63, 82–84 (TSK), and 100–104 (RGEAL). Residues Lys241 and Lys361 each carry the N6-acetyllysine modification. 2 disordered regions span residues 355–378 (PSGE…SDKV) and 400–491 (LSKP…KEMT). The span at 362–375 (STTSLTSSSTSGSS) shows a compositional bias: low complexity. Lys377 is modified (N6-acetyllysine). Residues 410–650 (AIVTEDKTDI…LLIDNYVPPL (241 aa)) are interaction with EXO1. The segment covering 443 to 457 (KNQSLEGDTTKGTSE) has biased composition (polar residues). The Nuclear localization signal signature appears at 471 to 474 (KRHR). A Phosphoserine modification is found at Ser477.

It belongs to the DNA mismatch repair MutL/HexB family. Component of the DNA mismatch repair (MMR) complex composed at least of MSH2, MSH3, MSH6, PMS1 and MLH1. Heterodimer of MLH1 and PMS2 (MutL alpha), MLH1 and PMS1 (MutL beta) or MLH1 and MLH3 (MutL gamma). Forms a ternary complex with MutS alpha (MSH2-MSH6) or MutS beta (MSH2-MSH3). Part of the BRCA1-associated genome surveillance complex (BASC), which contains BRCA1, MSH2, MSH6, MLH1, ATM, BLM, PMS2 and the RAD50-MRE11-NBS1 protein complex. This association could be a dynamic process changing throughout the cell cycle and within subnuclear domains. Interacts with MCM9; the interaction recruits MLH1 to chromatin. Interacts with MCM8. Interacts with PMS2; this interaction promotes MLH1 stability. Interacts with MBD4. Interacts with EXO1. Interacts with MTMR15/FAN1. Acetylated. Deacetylated by HDAC6 which prevents the MutL alpha complex, formed by the MLH1-PMS2 heterodimer, from being recruited to the MutS alpha complex, formed by the MSH2-MSH6 heterodimer, leading to tolerance of DNA damage. Post-translationally, ubiquitinated by UBR4; leading to proteasomal degradation. This ubiquitination is counteracted by the deubiquitinase USP5. In terms of tissue distribution, colon, lymphocytes, breast, lung, spleen, testis, prostate, thyroid, gall bladder and heart.

It localises to the nucleus. Its subcellular location is the chromosome. Its function is as follows. Heterodimerizes with PMS2 to form MutL alpha, a component of the post-replicative DNA mismatch repair system (MMR). DNA repair is initiated by MutS alpha (MSH2-MSH6) or MutS beta (MSH2-MSH3) binding to a dsDNA mismatch, then MutL alpha is recruited to the heteroduplex. Assembly of the MutL-MutS-heteroduplex ternary complex in presence of RFC and PCNA is sufficient to activate endonuclease activity of PMS2. It introduces single-strand breaks near the mismatch and thus generates new entry points for the exonuclease EXO1 to degrade the strand containing the mismatch. DNA methylation would prevent cleavage and therefore assure that only the newly mutated DNA strand is going to be corrected. MutL alpha (MLH1-PMS2) interacts physically with the clamp loader subunits of DNA polymerase III, suggesting that it may play a role to recruit the DNA polymerase III to the site of the MMR. Also implicated in DNA damage signaling, a process which induces cell cycle arrest and can lead to apoptosis in case of major DNA damages. Heterodimerizes with MLH3 to form MutL gamma which plays a role in meiosis. In Homo sapiens (Human), this protein is DNA mismatch repair protein Mlh1 (MLH1).